A 354-amino-acid chain; its full sequence is Ubiquitin-conjugating enzyme E2 Z (354 aa).

The segment at M1–A21 is disordered. Positions Q99 to V253 constitute a UBC core domain. The active-site Glycyl thioester intermediate is C188. A disordered region spans residues N332–V354. S337 carries the phosphoserine modification.

This sequence belongs to the ubiquitin-conjugating enzyme family. Widely expressed. Highly in placenta, pancreas, spleen and testis.

It localises to the cytoplasm. It is found in the nucleus. It carries out the reaction S-ubiquitinyl-[E1 ubiquitin-activating enzyme]-L-cysteine + [E2 ubiquitin-conjugating enzyme]-L-cysteine = [E1 ubiquitin-activating enzyme]-L-cysteine + S-ubiquitinyl-[E2 ubiquitin-conjugating enzyme]-L-cysteine.. It participates in protein modification; protein ubiquitination. Functionally, catalyzes the covalent attachment of ubiquitin to other proteins. Specific substrate for UBA6, not charged with ubiquitin by UBE1. May be involved in apoptosis regulation. The chain is Ubiquitin-conjugating enzyme E2 Z (UBE2Z) from Homo sapiens (Human).